Reading from the N-terminus, the 321-residue chain is Beta-ketoacyl-[acyl-carrier-protein] synthase III (321 aa).

Catalysis depends on residues Cys-114 and His-248. Residues 249–253 (QANIR) form an ACP-binding region. Asn-278 is a catalytic residue.

Belongs to the thiolase-like superfamily. FabH family. In terms of assembly, homodimer.

The protein localises to the cytoplasm. The enzyme catalyses malonyl-[ACP] + acetyl-CoA + H(+) = 3-oxobutanoyl-[ACP] + CO2 + CoA. The protein operates within lipid metabolism; fatty acid biosynthesis. Catalyzes the condensation reaction of fatty acid synthesis by the addition to an acyl acceptor of two carbons from malonyl-ACP. Catalyzes the first condensation reaction which initiates fatty acid synthesis and may therefore play a role in governing the total rate of fatty acid production. Possesses both acetoacetyl-ACP synthase and acetyl transacylase activities. Its substrate specificity determines the biosynthesis of branched-chain and/or straight-chain of fatty acids. The polypeptide is Beta-ketoacyl-[acyl-carrier-protein] synthase III (Methylococcus capsulatus (strain ATCC 33009 / NCIMB 11132 / Bath)).